The primary structure comprises 367 residues: Alanine racemase (367 aa).

The Proton acceptor; specific for D-alanine role is filled by Lys-34. Lys-34 is modified (N6-(pyridoxal phosphate)lysine). Arg-129 serves as a coordination point for substrate. Tyr-251 acts as the Proton acceptor; specific for L-alanine in catalysis. Met-299 is a substrate binding site.

It belongs to the alanine racemase family. Pyridoxal 5'-phosphate is required as a cofactor.

It catalyses the reaction L-alanine = D-alanine. Its pathway is amino-acid biosynthesis; D-alanine biosynthesis; D-alanine from L-alanine: step 1/1. Catalyzes the interconversion of L-alanine and D-alanine. May also act on other amino acids. The sequence is that of Alanine racemase (alr) from Thiobacillus denitrificans (strain ATCC 25259 / T1).